The chain runs to 299 residues: ATP phosphoribosyltransferase (299 aa).

This sequence belongs to the ATP phosphoribosyltransferase family. Long subfamily. Requires Mg(2+) as cofactor.

The protein localises to the cytoplasm. The catalysed reaction is 1-(5-phospho-beta-D-ribosyl)-ATP + diphosphate = 5-phospho-alpha-D-ribose 1-diphosphate + ATP. Its pathway is amino-acid biosynthesis; L-histidine biosynthesis; L-histidine from 5-phospho-alpha-D-ribose 1-diphosphate: step 1/9. Feedback inhibited by histidine. In terms of biological role, catalyzes the condensation of ATP and 5-phosphoribose 1-diphosphate to form N'-(5'-phosphoribosyl)-ATP (PR-ATP). Has a crucial role in the pathway because the rate of histidine biosynthesis seems to be controlled primarily by regulation of HisG enzymatic activity. The protein is ATP phosphoribosyltransferase of Campylobacter jejuni subsp. jejuni serotype O:6 (strain 81116 / NCTC 11828).